The primary structure comprises 1351 residues: Transcriptional regulator ovo (1351 aa).

Positions 1–31 (MPKIFLIKNRLHQQQQRLLESQNLLQHKNQD) are required for Ubr3 binding and tal-dependent proteolytic processing. 10 disordered regions span residues 22–77 (QNLL…SDQQ), 100–119 (LDHLNQNQSPNPNANANPNQ), 184–397 (NSPI…SDEE), 447–554 (AGHG…HFNA), 640–665 (SNSKFHNHHHHHQHNNNNNNNGGQTS), 778–807 (DDEESTSPRQDFELVSTPSLTPDSVTPVEQ), 834–887 (GSNQ…YQHA), 916–1000 (LLSQ…PSPT), 1023–1044 (PMSSSSSSGGTNSSNSSGGSSN), and 1113–1192 (SKHG…DSSS). The span at 49 to 60 (SPTPTSQPPPEP) shows a compositional bias: pro residues. Composition is skewed to low complexity over residues 61-72 (QGQGQQVLGQVP) and 104-119 (NQNQSPNPNANANPNQ). A compositionally biased stretch (basic and acidic residues) spans 205–232 (EKEKPAEREREKSDERTEQVEKEERVER). Positions 233–242 (EEEEDDEVDV) are enriched in acidic residues. The segment covering 262–272 (QRKEYPQEPKD) has biased composition (basic and acidic residues). Positions 324–340 (TPPPADQRPSPPPPRDP) are enriched in pro residues. Residues 447 to 486 (AGHGRNSSSSSGAAGQGFQSSGFGSQNSGSGSSSGNQNAG) show a composition bias toward low complexity. Residues 487 to 505 (SGAGSPGSGAGGGGGMGGG) show a composition bias toward gly residues. Polar residues predominate over residues 530–552 (KSGQQSTASNNTGQSPGANHSHF). Residues 644 to 653 (FHNHHHHHQH) show a composition bias toward basic residues. Positions 793 to 807 (STPSLTPDSVTPVEQ) are enriched in polar residues. Composition is skewed to low complexity over residues 835–878 (SNQQ…HVQQ), 916–962 (LLSQ…QQQQ), 970–979 (QQQQQPQPQS), 1025–1044 (SSSSSSGGTNSSNSSGGSSN), and 1121–1175 (HQQQ…HGSA). C2H2-type zinc fingers lie at residues 1197–1219 (FVCRVCMKTFSLQRLLNRHMKCH), 1225–1247 (YLCTFCGKGFNDTFDLKRHTRTH), 1253–1276 (YKCNLCEKSFTQRCSLESHCQKVH), and 1292–1315 (YVCEECGHTTCEPEVHYLHLKNNH).

In terms of assembly, interacts (via N-terminus) with Ubr3; the interaction is mediated by tal. In terms of processing, N-terminus is proteolytically cleaved and ubiquitinated via a tal-dependent mechanism, leading to the proteolytic degradation of the N-terminus and the production of transcriptional activator shavenbaby, a truncated form with transcriptional activator activity.

It is found in the cytoplasm. It localises to the nucleus. The protein resides in the nucleoplasm. Its function is as follows. Transcriptional regulator with essential functions in the germline and soma. Plays an essential role in regulating the formation of apical cell extensions such as denticles and aristae, and initiating cytoskeletal remodeling during epidermal differentiation. Functionally, transcriptional repressor which functions in postembryonic development. The full-length unprocessed form acts as a transcriptional repressor (Transcriptional repressor svb). Transcriptional activator which initiates trichome development and also promotes tarsal joint development. Has an essential somatic role regulating the tal-dependent formation of trichomes, and initiating cytoskeletal remodeling during epidermal differentiation. Function with SoxN is required for correct denticle morphogenesis on the embryonic epidermis. SoxN and svb appear to act both independently and in conjunction with each other to activate certain genes involved in denticle morphogenesis; Svb appears to be involved in regulating denticle length whereas SoxN regulates the denticle base circumference. Also functions in the development of other apical cell extensions such as bristles. Also has an important role in tarsal joint development, repressing expression of the N ligand Dl and defining its signaling boundary. In terms of biological role, transcriptional repressor which is specifically involved in female germline development, where it functions antagonistically to isoform D. Negatively regulates expression of otu and may also have autoregulatory activity. Negatively regulates expression of piwi in the primordial germ cells (PGCs). Its function is as follows. Transcriptional activator which is specifically involved in female germline development, where it functions antagonistically to isoform C. Necessary and sufficient for normal oogenesis. Required in the primordial germ cells (PGCs) for normal development of male and female germline cells. Plays a role in germline sex determination. Binds the promoter DNA and positively regulates the transcription of the otu gene in a stage-specific manner. May have autoregulatory activity. In Drosophila melanogaster (Fruit fly), this protein is Transcriptional regulator ovo.